The chain runs to 360 residues: MSFNTFGKQFRFTTWGESHGPALGCVVDGCPPNINLKEQDIQVELDKRKPGQSKFTTQRKEDDKVQILSGVFEGKTTGTPISLIIYNQDMRSKDYGDIKDKFRPGHADFTYFKKYGIRDYRGGGRSSARETAARVAAGAIAKKVLENKLGKKFKVVGAVTQLGILGCDTRKWNDLTINKNPFFCPDKNMLKLWEKYLLDIRKSGSSCGAVIEVRARGIPVGLGAPIYSKLDMDIASAMMSINAVKGVNIGSGMNSAQLSGEQNSDEISQKGKKLKFDSNNAGGILGGISTGQEIVVSFAVKPTSSILTTRKTINKFGKNTTISVKGRHDPCVGIRAVPVGEAMMNCVLLDHYLMNKAQCS.

An NADP(+)-binding site is contributed by R48. FMN-binding positions include 125 to 127, 242 to 243, G286, 301 to 305, and R327; these read RSS, NA, and KPTSS.

Belongs to the chorismate synthase family. Homotetramer. FMNH2 is required as a cofactor.

The catalysed reaction is 5-O-(1-carboxyvinyl)-3-phosphoshikimate = chorismate + phosphate. Its pathway is metabolic intermediate biosynthesis; chorismate biosynthesis; chorismate from D-erythrose 4-phosphate and phosphoenolpyruvate: step 7/7. Catalyzes the anti-1,4-elimination of the C-3 phosphate and the C-6 proR hydrogen from 5-enolpyruvylshikimate-3-phosphate (EPSP) to yield chorismate, which is the branch point compound that serves as the starting substrate for the three terminal pathways of aromatic amino acid biosynthesis. This reaction introduces a second double bond into the aromatic ring system. This is Chorismate synthase from Pelagibacter ubique (strain HTCC1062).